The sequence spans 40 residues: Photosystem II reaction center protein Y (40 aa).

The helical transmembrane segment at Leu-5 to Ile-23 threads the bilayer.

The protein belongs to the PsbY family. As to quaternary structure, PSII is composed of 1 copy each of membrane proteins PsbA, PsbB, PsbC, PsbD, PsbE, PsbF, PsbH, PsbI, PsbJ, PsbK, PsbL, PsbM, PsbT, PsbX, PsbY, PsbZ, Psb30/Ycf12, peripheral proteins PsbO, CyanoQ (PsbQ), PsbU, PsbV and a large number of cofactors. It forms dimeric complexes.

The protein resides in the cellular thylakoid membrane. In terms of biological role, loosely associated component of the core of photosystem II (PSII), it is not always seen in crystals. PSII is a light-driven water plastoquinone oxidoreductase, using light energy to abstract electrons from H(2)O, generating a proton gradient subsequently used for ATP formation. This is Photosystem II reaction center protein Y from Synechococcus sp. (strain RCC307).